A 103-amino-acid chain; its full sequence is MSTGVPSGSSAATGSNRRLQQTQNQVDEVVDIMRVNVDKVLERDQKLSELDDRADALQAGASQFETSAAKLKRKYWWKNCKMWAIGISVLVIIVIIIIVWCVS.

The disordered stretch occupies residues 1 to 25 (MSTGVPSGSSAATGSNRRLQQTQNQ). The Cytoplasmic segment spans residues 1 to 81 (MSTGVPSGSS…KRKYWWKNCK (81 aa)). The region spanning 18-78 (RLQQTQNQVD…AKLKRKYWWK (61 aa)) is the v-SNARE coiled-coil homology domain. Residues lysine 70, lysine 72, and lysine 81 each participate in a glycyl lysine isopeptide (Lys-Gly) (interchain with G-Cter in ubiquitin) cross-link. A helical; Anchor for type IV membrane protein transmembrane segment spans residues 82–102 (MWAIGISVLVIIVIIIIVWCV). Residue serine 103 is a topological domain, vesicular.

The protein belongs to the synaptobrevin family. In terms of assembly, interacts with POPDC1 (via the C-terminus cytoplasmic tail). Interacts with BCAP31; involved in VAMP3 export from the endoplasmic reticulum. Interacts with BAIAP3; this interaction is increased in the presence of calcium. Interacts with PICALM. Post-translationally, ubiquitinated by RNF167 at Lys-70, Lys-72 and Lys-81, regulating the recycling endosome pathway. In terms of processing, (Microbial infection) Targeted and hydrolyzed by C.botulinum neurotoxin type D (BoNT/D, botD) which hydrolyzes the 46-Lys-|-Leu-47 bond and probably inhibits neurotransmitter release. (Microbial infection) Targeted and hydrolyzed by C.botulinum neurotoxin type F (BoNT/F, botF) which hydrolyzes the 45-Gln-|-Lys-46 bond and probably inhibits neurotransmitter release. Post-translationally, (Microbial infection) Targeted and hydrolyzed by C.tetani toxin (tetX) which hydrolyzes the 63-Gln-|-Phe-64 bond and probably inhibits neurotransmitter release. In terms of tissue distribution, ubiquitous.

The protein localises to the early endosome membrane. Its subcellular location is the recycling endosome membrane. The protein resides in the synapse. It localises to the synaptosome. Functionally, SNARE involved in vesicular transport from the late endosomes to the trans-Golgi network. In Rattus norvegicus (Rat), this protein is Vesicle-associated membrane protein 3 (Vamp3).